The primary structure comprises 183 residues: Capsid protein (183 aa).

Positions 136-183 are disordered; the sequence is NAPILSTLPETTVVRRRGRSPRRRTPSPRRRRSQSPRRRRSQSPASQC. Residues 149–176 are compositionally biased toward basic residues; it reads VRRRGRSPRRRTPSPRRRRSQSPRRRRS. Phosphoserine; by host occurs at positions 155, 162, and 170. Residues 155–161 form a 1; half-length repeat; the sequence is SPRRRTP. The 3 X 8 AA repeats of S-P-R-R-R-[PR]-S-Q stretch occupies residues 155 to 177; that stretch reads SPRRRTPSPRRRRSQSPRRRRSQ. The short motif at 158-175 is the Bipartite nuclear localization signal element; sequence RRTPSPRRRRSQSPRRRR. 2 repeat units span residues 162 to 169 and 170 to 177. Positions 177–183 are RNA binding; the sequence is QSPASQC.

Belongs to the orthohepadnavirus core antigen family. Homodimerizes, then multimerizes. Interacts with cytosol exposed regions of viral L glycoprotein present in the reticulum-to-Golgi compartment. Interacts with human FLNB. Phosphorylated form interacts with host importin alpha; this interaction depends on the exposure of the NLS, which itself depends upon genome maturation and/or phosphorylation of the capsid protein. Interacts with host NUP153. In terms of processing, phosphorylated by host SRPK1, SRPK2, and maybe protein kinase C or GAPDH. Phosphorylation is critical for pregenomic RNA packaging. Protein kinase C phosphorylation is stimulated by HBx protein and may play a role in transport of the viral genome to the nucleus at the late step during the viral replication cycle.

It localises to the virion. Its subcellular location is the host cytoplasm. In terms of biological role, self assembles to form an icosahedral capsid. Most capsids appear to be large particles with an icosahedral symmetry of T=4 and consist of 240 copies of capsid protein, though a fraction forms smaller T=3 particles consisting of 180 capsid proteins. Entering capsids are transported along microtubules to the nucleus. Phosphorylation of the capsid is thought to induce exposure of nuclear localization signal in the C-terminal portion of the capsid protein that allows binding to the nuclear pore complex via the importin (karyopherin-) alpha and beta. Capsids are imported in intact form through the nuclear pore into the nuclear basket, where it probably binds NUP153. Only capsids that contain the mature viral genome can release the viral DNA and capsid protein into the nucleoplasm. Immature capsids get stuck in the basket. Capsids encapsulate the pre-genomic RNA and the P protein. Pre-genomic RNA is reverse-transcribed into DNA while the capsid is still in the cytoplasm. The capsid can then either be directed to the nucleus, providing more genomes for transcription, or bud through the endoplasmic reticulum to provide new virions. This is Capsid protein from Pan troglodytes (Chimpanzee).